Consider the following 154-residue polypeptide: Endoribonuclease YbeY (154 aa).

Residues histidine 113, histidine 117, and histidine 123 each contribute to the Zn(2+) site.

This sequence belongs to the endoribonuclease YbeY family. Zn(2+) serves as cofactor.

It localises to the cytoplasm. Its function is as follows. Single strand-specific metallo-endoribonuclease involved in late-stage 70S ribosome quality control and in maturation of the 3' terminus of the 16S rRNA. The polypeptide is Endoribonuclease YbeY (Anaplasma marginale (strain Florida)).